Here is a 511-residue protein sequence, read N- to C-terminus: GMP synthase [glutamine-hydrolyzing] (511 aa).

The Glutamine amidotransferase type-1 domain maps to 5–195 (DILVLDFGSQ…AKYACNCESV (191 aa)). Residue Cys-82 is the Nucleophile of the active site. Residues His-169 and Glu-171 contribute to the active site. The GMPS ATP-PPase domain occupies 196 to 386 (WNMGSFAKTQ…LGLSKEVVYR (191 aa)). 223-229 (SGGVDSS) provides a ligand contact to ATP.

As to quaternary structure, homodimer.

The enzyme catalyses XMP + L-glutamine + ATP + H2O = GMP + L-glutamate + AMP + diphosphate + 2 H(+). The protein operates within purine metabolism; GMP biosynthesis; GMP from XMP (L-Gln route): step 1/1. Functionally, catalyzes the synthesis of GMP from XMP. This chain is GMP synthase [glutamine-hydrolyzing], found in Campylobacter jejuni subsp. jejuni serotype O:23/36 (strain 81-176).